We begin with the raw amino-acid sequence, 235 residues long: Orotidine 5'-phosphate decarboxylase (235 aa).

Substrate contacts are provided by residues Asp-9, Lys-31, 58–67 (DLKFHDIPNT), Thr-121, Arg-180, Gln-190, Gly-210, and Arg-211. Catalysis depends on Lys-60, which acts as the Proton donor.

This sequence belongs to the OMP decarboxylase family. Type 1 subfamily. In terms of assembly, homodimer.

The enzyme catalyses orotidine 5'-phosphate + H(+) = UMP + CO2. It participates in pyrimidine metabolism; UMP biosynthesis via de novo pathway; UMP from orotate: step 2/2. Functionally, catalyzes the decarboxylation of orotidine 5'-monophosphate (OMP) to uridine 5'-monophosphate (UMP). In Nitratidesulfovibrio vulgaris (strain ATCC 29579 / DSM 644 / CCUG 34227 / NCIMB 8303 / VKM B-1760 / Hildenborough) (Desulfovibrio vulgaris), this protein is Orotidine 5'-phosphate decarboxylase.